The chain runs to 337 residues: Interferon gamma receptor 2 (337 aa).

The first 21 residues, 1–21 (MRPTLLWSLLLLLGVFAAAAA), serve as a signal peptide directing secretion. The Extracellular portion of the chain corresponds to 28-247 (SQLPAPQHPK…MADASTELQQ (220 aa)). One can recognise a Fibronectin type-III 1 domain in the interval 31–129 (PAPQHPKIRL…GALHSAWVTM (99 aa)). N-linked (GlcNAc...) asparagine glycans are attached at residues Asn-56 and Asn-85. The cysteines at positions 86 and 94 are disulfide-linked. Asn-110, Asn-137, Asn-219, and Asn-231 each carry an N-linked (GlcNAc...) asparagine glycan. In terms of domain architecture, Fibronectin type-III 2 spans 142–240 (PPENIEVTPG…NISCYETMAD (99 aa)). Residues Cys-209 and Cys-234 are joined by a disulfide bond. The helical transmembrane segment at 248–268 (VILISVGTFSLLSVLAGACFF) threads the bilayer. At 269 to 337 (LVLKYRGLIK…KEQEDVLQTL (69 aa)) the chain is on the cytoplasmic side. A Dileucine internalization motif motif is present at residues 276-277 (LI).

It belongs to the type II cytokine receptor family. As to quaternary structure, heterodimer with IFNGR1, to form the IFNG receptor complex. Interacts (via intracellular domain) with JAK2. In terms of tissue distribution, expressed in T-cells (at protein level).

Its subcellular location is the cell membrane. The protein localises to the cytoplasmic vesicle membrane. The protein resides in the golgi apparatus membrane. It is found in the endoplasmic reticulum membrane. It localises to the cytoplasm. Associates with IFNGR1 to form a receptor for the cytokine interferon gamma (IFNG). Ligand binding stimulates activation of the JAK/STAT signaling pathway. Required for signal transduction in contrast to other receptor subunit responsible for ligand binding. The chain is Interferon gamma receptor 2 from Homo sapiens (Human).